A 163-amino-acid polypeptide reads, in one-letter code: Nucleotide-binding protein EAT1b_2037 (163 aa).

It belongs to the YajQ family.

Its function is as follows. Nucleotide-binding protein. This chain is Nucleotide-binding protein EAT1b_2037, found in Exiguobacterium sp. (strain ATCC BAA-1283 / AT1b).